Consider the following 950-residue polypeptide: Bifunctional glutamine synthetase adenylyltransferase/adenylyl-removing enzyme (950 aa).

Positions 1–440 (MLPLPSELQI…VFDHLIGDDA (440 aa)) are adenylyl removase. The adenylyl transferase stretch occupies residues 449 to 950 (HGLYKSLWQD…KWLVAAPSDV (502 aa)).

The protein belongs to the GlnE family. Mg(2+) is required as a cofactor.

The enzyme catalyses [glutamine synthetase]-O(4)-(5'-adenylyl)-L-tyrosine + phosphate = [glutamine synthetase]-L-tyrosine + ADP. It carries out the reaction [glutamine synthetase]-L-tyrosine + ATP = [glutamine synthetase]-O(4)-(5'-adenylyl)-L-tyrosine + diphosphate. Functionally, involved in the regulation of glutamine synthetase GlnA, a key enzyme in the process to assimilate ammonia. When cellular nitrogen levels are high, the C-terminal adenylyl transferase (AT) inactivates GlnA by covalent transfer of an adenylyl group from ATP to specific tyrosine residue of GlnA, thus reducing its activity. Conversely, when nitrogen levels are low, the N-terminal adenylyl removase (AR) activates GlnA by removing the adenylyl group by phosphorolysis, increasing its activity. The regulatory region of GlnE binds the signal transduction protein PII (GlnB) which indicates the nitrogen status of the cell. This chain is Bifunctional glutamine synthetase adenylyltransferase/adenylyl-removing enzyme, found in Yersinia enterocolitica serotype O:8 / biotype 1B (strain NCTC 13174 / 8081).